Reading from the N-terminus, the 193-residue chain is MRCPYCGGLDTQVKDSRPSEDASAIRRRRICPDCGGRFTTFERVQLRELTVVKRSGRKVPFDRDKLQRSIDVALRKRSVESDRIERLVSGITRQLESSGEPEVTSEAIGELVMEGLKGLDDVAYVRFASVYKNFREAKDFEELLGRLSADQQDGAVPQAEADRPIGAGPPSEAAQPAAGEGGDAPMRRARSRA.

A zinc finger spans residues Cys-3 to Cys-34. The region spanning Leu-49–Asp-139 is the ATP-cone domain. The interval Asp-150 to Ala-193 is disordered.

It belongs to the NrdR family. Zn(2+) serves as cofactor.

Functionally, negatively regulates transcription of bacterial ribonucleotide reductase nrd genes and operons by binding to NrdR-boxes. The polypeptide is Transcriptional repressor NrdR (Methylobacterium nodulans (strain LMG 21967 / CNCM I-2342 / ORS 2060)).